A 352-amino-acid chain; its full sequence is Ferrochelatase (352 aa).

Positions 222 and 303 each coordinate Fe cation.

It belongs to the ferrochelatase family.

Its subcellular location is the cytoplasm. It carries out the reaction heme b + 2 H(+) = protoporphyrin IX + Fe(2+). Its pathway is porphyrin-containing compound metabolism; protoheme biosynthesis; protoheme from protoporphyrin-IX: step 1/1. Functionally, catalyzes the ferrous insertion into protoporphyrin IX. This chain is Ferrochelatase, found in Brucella melitensis biotype 2 (strain ATCC 23457).